The following is a 542-amino-acid chain: Chaperonin GroEL 3 (542 aa).

ATP-binding positions include 29–32 (TLGP), 86–90 (DGTTT), Gly-413, 477–479 (NAA), and Asp-493.

Belongs to the chaperonin (HSP60) family. In terms of assembly, forms a cylinder of 14 subunits composed of two heptameric rings stacked back-to-back. Interacts with the co-chaperonin GroES.

The protein localises to the cytoplasm. It catalyses the reaction ATP + H2O + a folded polypeptide = ADP + phosphate + an unfolded polypeptide.. Its function is as follows. Together with its co-chaperonin GroES, plays an essential role in assisting protein folding. The GroEL-GroES system forms a nano-cage that allows encapsulation of the non-native substrate proteins and provides a physical environment optimized to promote and accelerate protein folding. This is Chaperonin GroEL 3 from Frankia alni (strain DSM 45986 / CECT 9034 / ACN14a).